Here is a 326-residue protein sequence, read N- to C-terminus: Malate dehydrogenase (326 aa).

12–18 lines the NAD(+) pocket; the sequence is GAAGQIA. Positions 93 and 99 each coordinate substrate. NAD(+) is bound by residues Asn106, Gln113, and 130–132; that span reads VGN. Residues Asn132 and Arg163 each coordinate substrate. Catalysis depends on His188, which acts as the Proton acceptor.

It belongs to the LDH/MDH superfamily. MDH type 2 family.

It carries out the reaction (S)-malate + NAD(+) = oxaloacetate + NADH + H(+). In terms of biological role, catalyzes the reversible oxidation of malate to oxaloacetate. The polypeptide is Malate dehydrogenase (Corynebacterium diphtheriae (strain ATCC 700971 / NCTC 13129 / Biotype gravis)).